Here is a 356-residue protein sequence, read N- to C-terminus: UDP-N-acetylglucosamine--N-acetylmuramyl-(pentapeptide) pyrophosphoryl-undecaprenol N-acetylglucosamine transferase (356 aa).

UDP-N-acetyl-alpha-D-glucosamine-binding positions include 12-14, Asn124, Arg163, Ser188, Ile242, 261-266, and Gln287; these read TGG and ALTVSE.

This sequence belongs to the glycosyltransferase 28 family. MurG subfamily.

Its subcellular location is the cell inner membrane. It carries out the reaction di-trans,octa-cis-undecaprenyl diphospho-N-acetyl-alpha-D-muramoyl-L-alanyl-D-glutamyl-meso-2,6-diaminopimeloyl-D-alanyl-D-alanine + UDP-N-acetyl-alpha-D-glucosamine = di-trans,octa-cis-undecaprenyl diphospho-[N-acetyl-alpha-D-glucosaminyl-(1-&gt;4)]-N-acetyl-alpha-D-muramoyl-L-alanyl-D-glutamyl-meso-2,6-diaminopimeloyl-D-alanyl-D-alanine + UDP + H(+). It participates in cell wall biogenesis; peptidoglycan biosynthesis. Its function is as follows. Cell wall formation. Catalyzes the transfer of a GlcNAc subunit on undecaprenyl-pyrophosphoryl-MurNAc-pentapeptide (lipid intermediate I) to form undecaprenyl-pyrophosphoryl-MurNAc-(pentapeptide)GlcNAc (lipid intermediate II). This is UDP-N-acetylglucosamine--N-acetylmuramyl-(pentapeptide) pyrophosphoryl-undecaprenol N-acetylglucosamine transferase from Azotobacter vinelandii (strain DJ / ATCC BAA-1303).